The following is a 562-amino-acid chain: Glutamate--tRNA ligase (562 aa).

The short motif at Pro104 to Asn114 is the 'HIGH' region element.

The protein belongs to the class-I aminoacyl-tRNA synthetase family. Glutamate--tRNA ligase type 2 subfamily.

It is found in the cytoplasm. It catalyses the reaction tRNA(Glu) + L-glutamate + ATP = L-glutamyl-tRNA(Glu) + AMP + diphosphate. Catalyzes the attachment of glutamate to tRNA(Glu) in a two-step reaction: glutamate is first activated by ATP to form Glu-AMP and then transferred to the acceptor end of tRNA(Glu). The protein is Glutamate--tRNA ligase of Ignicoccus hospitalis (strain KIN4/I / DSM 18386 / JCM 14125).